A 201-amino-acid polypeptide reads, in one-letter code: Translation initiation factor IF-3 (201 aa).

This sequence belongs to the IF-3 family. Monomer.

Its subcellular location is the cytoplasm. Its function is as follows. IF-3 binds to the 30S ribosomal subunit and shifts the equilibrium between 70S ribosomes and their 50S and 30S subunits in favor of the free subunits, thus enhancing the availability of 30S subunits on which protein synthesis initiation begins. The sequence is that of Translation initiation factor IF-3 from Prochlorococcus marinus (strain SARG / CCMP1375 / SS120).